A 652-amino-acid chain; its full sequence is MKKRIKELTDLLNRYRYDYYTKDAPSVSDSDYDKLYRELVTLEQSYPEYVLQDSPTQQVGGTILKGFEKYRHQYPLFSLQDAFSREELDAFDKRVKAEFPNATYLAELKIDGLSISLSYENGFLQVGATRGDGNIGENITENIKKIKDIPHQLSEPLTITVRGEAYMSRQSFKAINEARQENGETEFANPRNAAAGTLRQLDTSVVAKRQLATFLYQEASPTARNQQNEVLAELADLGFSVNPYYQLTSSMDEIWDFIKTIEAKRDQLAYDIDGVVIKVNSLAMQEELGFTVKAPRWAIAYKFPAEEKEAEILSVDWTVGRTGVVTPTANLTPVQLAGTTVSRATLHNVDYIAEKDIRIGDTVIVYKAGDIIPAVLNVVMSKRNQQEVMLIPKLCPSCGSELVHFEDEVALRCINPLCPSLIQRSLEHFASRDAMNITGLGPAIVEKLFLAGFVHDVADIYQLTKEDFMQLDGIKEKSADKLLAAIEASKSNSAEKLLFGLGIRHIGSKVSRLILEVYGDISALLTAKEEEIARIDGLGSTIAQSLTQYFEQKTAAILVDELKTAGVNMHYSGQKVNSDAALFGLTVVLTGKLNQLNRNEAKDKLEALGAKVTGSVSKKTDLVIAGSDAGSKLEKAKSLGIRIEDEDWLRKL.

NAD(+) is bound by residues 29-33 (DSDYD), 78-79 (SL), and Glu-107. Residue Lys-109 is the N6-AMP-lysine intermediate of the active site. NAD(+) is bound by residues Arg-130, Glu-164, Lys-278, and Lys-302. Residues Cys-395, Cys-398, Cys-413, and Cys-418 each contribute to the Zn(2+) site. Residues 577–652 (NSDAALFGLT…IEDEDWLRKL (76 aa)) enclose the BRCT domain.

Belongs to the NAD-dependent DNA ligase family. LigA subfamily. Requires Mg(2+) as cofactor. Mn(2+) is required as a cofactor.

It catalyses the reaction NAD(+) + (deoxyribonucleotide)n-3'-hydroxyl + 5'-phospho-(deoxyribonucleotide)m = (deoxyribonucleotide)n+m + AMP + beta-nicotinamide D-nucleotide.. DNA ligase that catalyzes the formation of phosphodiester linkages between 5'-phosphoryl and 3'-hydroxyl groups in double-stranded DNA using NAD as a coenzyme and as the energy source for the reaction. It is essential for DNA replication and repair of damaged DNA. This Streptococcus pyogenes serotype M18 (strain MGAS8232) protein is DNA ligase.